The following is a 293-amino-acid chain: Glutamyl-Q tRNA(Asp) synthetase (293 aa).

L-glutamate-binding positions include 8-12 and Glu44; that span reads RFAPS. A 'HIGH' region motif is present at residues 11–21; that stretch reads PSPSGPLHAGS. Positions 98, 100, 120, and 124 each coordinate Zn(2+). L-glutamate contacts are provided by Tyr183 and Arg201. The short motif at 239–243 is the 'KMSKS' region element; that stretch reads KLSKQ. Residue Lys242 participates in ATP binding.

It belongs to the class-I aminoacyl-tRNA synthetase family. GluQ subfamily. The cofactor is Zn(2+).

Its function is as follows. Catalyzes the tRNA-independent activation of glutamate in presence of ATP and the subsequent transfer of glutamate onto a tRNA(Asp). Glutamate is transferred on the 2-amino-5-(4,5-dihydroxy-2-cyclopenten-1-yl) moiety of the queuosine in the wobble position of the QUC anticodon. The polypeptide is Glutamyl-Q tRNA(Asp) synthetase (Janthinobacterium sp. (strain Marseille) (Minibacterium massiliensis)).